Consider the following 64-residue polypeptide: Cytochrome c oxidase subunit 5C (64 aa).

The helical transmembrane segment at 16-34 threads the bilayer; the sequence is VVKELVIGFSLGLVAGGFW.

It belongs to the cytochrome c oxidase subunit 5C family. As to quaternary structure, sweet potato cytochrome C oxidase consists of at least seven different polypeptides species, subunits I, II, III, IV, Va, Vb, and Vc in order of MW.

It is found in the mitochondrion inner membrane. In terms of biological role, this protein is one of the nuclear-coded polypeptide chains of cytochrome c oxidase, the terminal oxidase in mitochondrial electron transport. This is Cytochrome c oxidase subunit 5C (COX5C) from Ipomoea batatas (Sweet potato).